A 138-amino-acid polypeptide reads, in one-letter code: uncharacterized protein (138 aa).

The segment at 1 to 27 is disordered; the sequence is MEGELIENNGLDIYDTSETPKKRGRPA.

This is an uncharacterized protein from Escherichia coli (strain K12).